Reading from the N-terminus, the 242-residue chain is Uridylate kinase (242 aa).

12 to 15 (KLSG) contacts ATP. An involved in allosteric activation by GTP region spans residues 20–25 (GEKGYG). Gly-55 contacts UMP. Gly-56 and Arg-60 together coordinate ATP. UMP contacts are provided by residues Asp-75 and 136–143 (TGNPYFST). Residues Tyr-169 and Asp-172 each coordinate ATP.

This sequence belongs to the UMP kinase family. As to quaternary structure, homohexamer.

The protein resides in the cytoplasm. It catalyses the reaction UMP + ATP = UDP + ADP. It participates in pyrimidine metabolism; CTP biosynthesis via de novo pathway; UDP from UMP (UMPK route): step 1/1. Allosterically activated by GTP. Inhibited by UTP. Catalyzes the reversible phosphorylation of UMP to UDP. This is Uridylate kinase from Carboxydothermus hydrogenoformans (strain ATCC BAA-161 / DSM 6008 / Z-2901).